The following is a 583-amino-acid chain: Aspartate--tRNA ligase (583 aa).

E169 serves as a coordination point for L-aspartate. An aspartate region spans residues 193-196; it reads QLFK. R215 is a binding site for L-aspartate. Residues 215 to 217 and Q224 each bind ATP; that span reads RDE. H443 is a binding site for L-aspartate. E477 contributes to the ATP binding site. R484 contacts L-aspartate. 529 to 532 is a binding site for ATP; the sequence is GIDR.

It belongs to the class-II aminoacyl-tRNA synthetase family. Type 1 subfamily. Homodimer.

The protein resides in the cytoplasm. It carries out the reaction tRNA(Asp) + L-aspartate + ATP = L-aspartyl-tRNA(Asp) + AMP + diphosphate. Its function is as follows. Catalyzes the attachment of L-aspartate to tRNA(Asp) in a two-step reaction: L-aspartate is first activated by ATP to form Asp-AMP and then transferred to the acceptor end of tRNA(Asp). This is Aspartate--tRNA ligase from Stenotrophomonas maltophilia (strain K279a).